The following is a 309-amino-acid chain: MPISKTLPYNAIEQIKSYLLQLQNTICVSLESIDGQTKFHEDSWQRAAGGGGKTRIMANGNVFEKAGVNFSHVSGEQLPASASAHREELAGRHFSALGVSLVIHPQNPYVPTTHANVRFFVAEKEDSEPVWWFGGGFDLTPYYGFIEDCEHWHQTALNACLPFGETIYPKFKRWCDDYFFIKHRNEARGIGGLFFDDYNEISFDHSFELMRSIGDHFILAYEPIVARRKDIPFGNREKAFQNYRRGRYAEFNLVYDRGTLFGLQSGGRTESILMSLPPIVHWEYNWHPEKGSNEEKLYTDFLPAKDWLK.

Serine 100 is a substrate binding site. A divalent metal cation-binding residues include histidine 104 and histidine 114. Histidine 114 acts as the Proton donor in catalysis. Substrate is bound at residue 116-118 (NVR). 2 residues coordinate a divalent metal cation: histidine 153 and histidine 183. Residues 248–283 (YAEFNLVYDRGTLFGLQSGGRTESILMSLPPIVHWE) form an important for dimerization region. 266–268 (GGR) contacts substrate.

This sequence belongs to the aerobic coproporphyrinogen-III oxidase family. As to quaternary structure, homodimer. A divalent metal cation is required as a cofactor.

The protein localises to the cytoplasm. It catalyses the reaction coproporphyrinogen III + O2 + 2 H(+) = protoporphyrinogen IX + 2 CO2 + 2 H2O. It participates in porphyrin-containing compound metabolism; protoporphyrin-IX biosynthesis; protoporphyrinogen-IX from coproporphyrinogen-III (O2 route): step 1/1. Functionally, involved in the heme biosynthesis. Catalyzes the aerobic oxidative decarboxylation of propionate groups of rings A and B of coproporphyrinogen-III to yield the vinyl groups in protoporphyrinogen-IX. In Legionella pneumophila (strain Lens), this protein is Oxygen-dependent coproporphyrinogen-III oxidase.